Consider the following 457-residue polypeptide: Cystathionine beta-lyase, chloroplastic (457 aa).

The transit peptide at 1–51 directs the protein to the chloroplast; that stretch reads MFSRPFVTPVTIDLQVKSITAGNMWEGLGFYKPANSKSNQMICSKGFRLNC. Y120, R122, G150, M151, S268, and T270 together coordinate pyridoxal 5'-phosphate. K271 carries the post-translational modification N6-(pyridoxal phosphate)lysine.

Belongs to the trans-sulfuration enzymes family. In terms of assembly, forms homodimers. May form homotetramers from two homodimers. Pyridoxal 5'-phosphate is required as a cofactor.

It is found in the plastid. It localises to the chloroplast. It catalyses the reaction L,L-cystathionine + H2O = L-homocysteine + pyruvate + NH4(+). The enzyme catalyses an S-substituted L-cysteine + H2O = a thiol + pyruvate + NH4(+). Functionally, catalyzes the degradation of cystathionine. This Mimosa pudica (Sensitive plant) protein is Cystathionine beta-lyase, chloroplastic.